We begin with the raw amino-acid sequence, 84 residues long: MYKVKVYVSLKESVLDPQGSAVQHALHSMTYNEVQDVRIGKYMELTIEKSDRDLDVLVKEMCEKLLANTVIEDYRYEVEEVVAQ.

Belongs to the PurS family. In terms of assembly, homodimer or homotetramer. Part of the FGAM synthase complex composed of 1 PurL, 1 PurQ and 2 PurS subunits.

The protein resides in the cytoplasm. It carries out the reaction N(2)-formyl-N(1)-(5-phospho-beta-D-ribosyl)glycinamide + L-glutamine + ATP + H2O = 2-formamido-N(1)-(5-O-phospho-beta-D-ribosyl)acetamidine + L-glutamate + ADP + phosphate + H(+). Its pathway is purine metabolism; IMP biosynthesis via de novo pathway; 5-amino-1-(5-phospho-D-ribosyl)imidazole from N(2)-formyl-N(1)-(5-phospho-D-ribosyl)glycinamide: step 1/2. Part of the phosphoribosylformylglycinamidine synthase complex involved in the purines biosynthetic pathway. Catalyzes the ATP-dependent conversion of formylglycinamide ribonucleotide (FGAR) and glutamine to yield formylglycinamidine ribonucleotide (FGAM) and glutamate. The FGAM synthase complex is composed of three subunits. PurQ produces an ammonia molecule by converting glutamine to glutamate. PurL transfers the ammonia molecule to FGAR to form FGAM in an ATP-dependent manner. PurS interacts with PurQ and PurL and is thought to assist in the transfer of the ammonia molecule from PurQ to PurL. The polypeptide is Phosphoribosylformylglycinamidine synthase subunit PurS (Bacillus subtilis (strain 168)).